We begin with the raw amino-acid sequence, 217 residues long: LexA repressor (217 aa).

The H-T-H motif DNA-binding region spans 28-48 (RAEIAAEFGFSSPNAAEEHLR). Residues S136 and K173 each act as for autocatalytic cleavage activity in the active site.

It belongs to the peptidase S24 family. In terms of assembly, homodimer.

It carries out the reaction Hydrolysis of Ala-|-Gly bond in repressor LexA.. Functionally, represses a number of genes involved in the response to DNA damage (SOS response), including recA and lexA. In the presence of single-stranded DNA, RecA interacts with LexA causing an autocatalytic cleavage which disrupts the DNA-binding part of LexA, leading to derepression of the SOS regulon and eventually DNA repair. The sequence is that of LexA repressor from Cupriavidus necator (strain ATCC 17699 / DSM 428 / KCTC 22496 / NCIMB 10442 / H16 / Stanier 337) (Ralstonia eutropha).